Consider the following 471-residue polypeptide: 3-isopropylmalate dehydratase large subunit (471 aa).

Residues Cys347, Cys407, and Cys410 each contribute to the [4Fe-4S] cluster site.

The protein belongs to the aconitase/IPM isomerase family. LeuC type 1 subfamily. As to quaternary structure, heterodimer of LeuC and LeuD. The cofactor is [4Fe-4S] cluster.

The enzyme catalyses (2R,3S)-3-isopropylmalate = (2S)-2-isopropylmalate. It functions in the pathway amino-acid biosynthesis; L-leucine biosynthesis; L-leucine from 3-methyl-2-oxobutanoate: step 2/4. Catalyzes the isomerization between 2-isopropylmalate and 3-isopropylmalate, via the formation of 2-isopropylmaleate. This Geobacillus thermodenitrificans (strain NG80-2) protein is 3-isopropylmalate dehydratase large subunit.